Consider the following 423-residue polypeptide: Keratin, type I cytoskeletal 18 (423 aa).

Ser2 is modified (N-acetylserine). The interval 2–71 is head; it reads SFTTRSTTFS…GLAGMGGVQT (70 aa). Phosphoserine occurs at positions 7, 11, 16, and 19. A phosphoserine; alternate mark is found at Ser31 and Ser32. Ser31 and Ser32 each carry an O-linked (GlcNAc) serine; alternate glycan. A Phosphoserine modification is found at Ser35. Tyr37 is subject to Phosphotyrosine. Ser43 is modified (phosphoserine). Residue Arg46 is modified to Omega-N-methylarginine. A Phosphoserine; alternate modification is found at Ser50. O-linked (GlcNAc) serine; alternate glycosylation is present at Ser50. Ser52 bears the Phosphoserine; by MAPKAPK2 and MAPKAPK3 mark. Phosphoserine occurs at positions 57 and 60. Residues 62 to 366 are necessary for interaction with PNN; it reads GLAGMGGVQT…EALLNIKVKL (305 aa). The interval 69-121 is interaction with TRADD; the sequence is VQTEKETMQDLNDRLASYLDKVKNLETENRRLESKIREYLEKRGPQGVRDWGH. Residues 72 to 107 form a coil 1A region; sequence EKETMQDLNDRLASYLDKVKNLETENRRLESKIREY. The IF rod domain occupies 72-384; sequence EKETMQDLND…RLLEDGDDFS (313 aa). Lys73 is covalently cross-linked (Glycyl lysine isopeptide (Lys-Gly) (interchain with G-Cter in SUMO2)). Ser85 bears the Phosphoserine mark. Residues 108–125 are linker 1; the sequence is LEKRGPQGVRDWGHYFKT. Lys124 is modified (N6-acetyllysine). Residues 126-217 are coil 1B; that stretch reads IEDLRAQIFA…KNHEEEVQGL (92 aa). Ser137 and Ser170 each carry phosphoserine. The linker 12 stretch occupies residues 218–241; it reads EAQIASSGLTVEVDAPKSQDLSKI. Residues 236-384 are interaction with DNAJB6; sequence QDLSKIMADI…RLLEDGDDFS (149 aa). Lys240 is covalently cross-linked (Glycyl lysine isopeptide (Lys-Gly) (interchain with G-Cter in SUMO2)). The segment at 242–380 is coil 2; the sequence is MADIRAQYEQ…ATYRRLLEDG (139 aa). Thr295 carries the phosphothreonine modification. Residues Lys363 and Lys365 each participate in a glycyl lysine isopeptide (Lys-Gly) (interchain with G-Cter in SUMO2) cross-link. Residues 381-423 form a tail region; it reads DDFSLNDALDSSNSMQTVQRTTTRKVVDGKVVSETNDTRVLRH. A phosphoserine mark is found at Ser384, Ser391, Ser392, and Ser394. Thr397 bears the Phosphothreonine mark. A Glycyl lysine isopeptide (Lys-Gly) (interchain with G-Cter in SUMO2) cross-link involves residue Lys410.

Belongs to the intermediate filament family. Heterotetramer of two type I and two type II keratins. KRT18 associates with KRT8. Interacts with PNN and mutated CFTR. Interacts with YWHAE, YWHAH and YWHAZ only when phosphorylated. Interacts with DNAJB6, TCHP and TRADD. Interacts with the thrombin-antithrombin complex. Interacts with FAM83H. Interacts with EPPK1. Interacts with PKP1 and PKP2. Post-translationally, phosphorylation increases by IL-6. Proteolytically cleaved by caspases during epithelial cell apoptosis. Cleavage occurs at Asp-231 by either caspase-3, caspase-6 or caspase-7. In terms of processing, dephosphorylated by ethanol. Post-translationally, O-GlcNAcylation increases solubility, and decreases stability by inducing proteasomal degradation. Expressed on the plasma membrane of hepatocytes and in the narrow apical portions of supporting cells in the vomeronasal sensory epithelium. Detected in the type III alveolar cells of the lung, in the proliferative crypt epithelium of the small intestine and in the older intragemmal cells of the tongue.

It is found in the nucleus matrix. The protein localises to the cytoplasm. The protein resides in the perinuclear region. It localises to the nucleus. Its subcellular location is the nucleolus. In terms of biological role, when phosphorylated, plays a role in filament reorganization. Involved in the delivery of mutated CFTR to the plasma membrane. Together with KRT8, is involved in interleukin-6 (IL-6)-mediated barrier protection. Involved in the uptake of thrombin-antithrombin complexes by hepatic cells. The polypeptide is Keratin, type I cytoskeletal 18 (Rattus norvegicus (Rat)).